We begin with the raw amino-acid sequence, 238 residues long: Orotidine 5'-phosphate decarboxylase (238 aa).

Residues aspartate 10, lysine 32, 59 to 68, threonine 122, arginine 184, glutamine 193, glycine 213, and arginine 214 each bind substrate; that span reads DLKLHDIPNT. Catalysis depends on lysine 61, which acts as the Proton donor.

The protein belongs to the OMP decarboxylase family. Type 1 subfamily. In terms of assembly, homodimer.

The enzyme catalyses orotidine 5'-phosphate + H(+) = UMP + CO2. The protein operates within pyrimidine metabolism; UMP biosynthesis via de novo pathway; UMP from orotate: step 2/2. Its function is as follows. Catalyzes the decarboxylation of orotidine 5'-monophosphate (OMP) to uridine 5'-monophosphate (UMP). This Bacillus cereus (strain AH187) protein is Orotidine 5'-phosphate decarboxylase.